Reading from the N-terminus, the 82-residue chain is MDYIISPIVTEKTTLMMEKENKITFLVNRKATKEAIKNEVEARFNVKVAKVNMMIAKNGKKAIVTLAKDFSAEEVGGRMGIF.

This sequence belongs to the universal ribosomal protein uL23 family. In terms of assembly, part of the 50S ribosomal subunit. Contacts protein L29.

In terms of biological role, binds to 23S rRNA. One of the proteins that surrounds the polypeptide exit tunnel on the outside of the ribosome. The protein is Large ribosomal subunit protein uL23 of Picrophilus torridus (strain ATCC 700027 / DSM 9790 / JCM 10055 / NBRC 100828 / KAW 2/3).